The chain runs to 93 residues: Transcription factor PRE3 (93 aa).

The 56-residue stretch at 6–61 (SRSRQSSGTSRISEDQINDLIIKLQQLLPELRDSRRSDKVSAARVLQDTCNYIRNL) folds into the bHLH domain.

As to quaternary structure, homodimer. Interacts with BHLH 147, BHLH148, BHLH149, BHLH150 and IBH1. Interacts with SIEL. Expressed in root and shoot meristems, and young siliques. Low levels detected in all aerial tissues.

Its subcellular location is the nucleus. The protein localises to the cytoplasm. Atypical and probable non DNA-binding bHLH transcription factor required for MONOPTEROS-dependent root initiation in embryo. Promotes the correct definition of the hypophysis cell division plane. Transcriptionally controlled by MONOPTEROS. Moves from its site of synthesis in pro-embryos cells into the hypophysis. Regulates brassinosteroid (BR) signaling by sequestering negative BR signaling components. May function as positive regulator of gibberellin signaling. May play a role in the regulation of light signaling and possibly auxin signaling. This is Transcription factor PRE3 (PRE3) from Arabidopsis thaliana (Mouse-ear cress).